The primary structure comprises 246 residues: MAAAAATKILLCLPLLLLLSGWSRAGRADPHSLCYDITVIPKFRPGPRWCAVQGQVDEKTFLHYDCGNKTVTPVSPLGKKLNVTTAWKAQNPVLREVVDILTEQLRDIQLENYTPKEPLTLQARMSCEQKAEGHSSGSWQFSFDGQIFLLFDSEKRMWTTVHPGARKMKEKWENDKVVAMSFHYFSMGDCIGWLEDFLMGMDSTLEPSAGAPLAMSSGTTQLRATATTLILCCLLIILPCFILPGI.

Residues Met1 to Ala25 form the signal peptide. The MHC class I alpha-1 like stretch occupies residues Asp29–Glu117. The cysteines at positions 50 and 66 are disulfide-linked. Asn68 and Asn82 each carry an N-linked (GlcNAc...) asparagine glycan. Positions Pro118–Gly210 are MHC class I alpha-2 like. Cysteines 127 and 190 form a disulfide. An a protein-binding site is contributed by Ser216. The GPI-anchor amidated serine moiety is linked to residue Ser217. Positions Gly218–Ile246 are cleaved as a propeptide — removed in mature form.

Belongs to the MHC class I family. Interacts with KLRK1/NKG2D. Does not bind to beta2-microglobulin. In terms of assembly, (Microbial infection) In CMV-infected cells, interacts with the viral glycoprotein UL16; this interaction causes ULBP2 retention in the endoplasmic reticulum and cis-Golgi and prevents binding to and activation of KLRK1/NKG2D, providing CMV with an immune evasion mechanism. As to expression, expressed in various types of cancer cell lines and in the fetus, but not in normal tissues.

The protein resides in the cell membrane. The protein localises to the endoplasmic reticulum. Its subcellular location is the secreted. Its function is as follows. Binds and activates the KLRK1/NKG2D receptor, mediating natural killer cell cytotoxicity. The chain is UL16-binding protein 2 from Homo sapiens (Human).